We begin with the raw amino-acid sequence, 232 residues long: 5'-methylthioadenosine/S-adenosylhomocysteine nucleosidase (232 aa).

Glutamate 12 (proton acceptor) is an active-site residue. Substrate-binding positions include glycine 78, isoleucine 152, and 173–174 (ME). Aspartate 197 (proton donor) is an active-site residue.

Belongs to the PNP/UDP phosphorylase family. MtnN subfamily. As to quaternary structure, homodimer.

It catalyses the reaction S-adenosyl-L-homocysteine + H2O = S-(5-deoxy-D-ribos-5-yl)-L-homocysteine + adenine. The enzyme catalyses S-methyl-5'-thioadenosine + H2O = 5-(methylsulfanyl)-D-ribose + adenine. The catalysed reaction is 5'-deoxyadenosine + H2O = 5-deoxy-D-ribose + adenine. The protein operates within amino-acid biosynthesis; L-methionine biosynthesis via salvage pathway; S-methyl-5-thio-alpha-D-ribose 1-phosphate from S-methyl-5'-thioadenosine (hydrolase route): step 1/2. Catalyzes the irreversible cleavage of the glycosidic bond in both 5'-methylthioadenosine (MTA) and S-adenosylhomocysteine (SAH/AdoHcy) to adenine and the corresponding thioribose, 5'-methylthioribose and S-ribosylhomocysteine, respectively. Also cleaves 5'-deoxyadenosine, a toxic by-product of radical S-adenosylmethionine (SAM) enzymes, into 5-deoxyribose and adenine. Thus, is required for in vivo function of the radical SAM enzymes biotin synthase and lipoic acid synthase, that are inhibited by 5'-deoxyadenosine accumulation. The polypeptide is 5'-methylthioadenosine/S-adenosylhomocysteine nucleosidase (Edwardsiella ictaluri (strain 93-146)).